Reading from the N-terminus, the 244-residue chain is Inner kinetochore subunit fta7 (244 aa).

This sequence belongs to the CENP-Q/OKP1 family. As to quaternary structure, component of the heterotetrameric kinetochore subcomplex COMA, which consists of fta2, fta7, mal2 and mis17. The COMA subcomplex is part of a larger constitutive centromere-associated network (CCAN) (also known as central kinetochore Sim4 complex in fission yeast), which is composed of at least cnl2, cnp3, cnp20, fta1, fta2, fta3, fta4, fta6, fta7, mal2, mhf1, mhf2, mis6, mis15, mis17, sim4 and wip1.

The protein resides in the nucleus. The protein localises to the chromosome. It is found in the centromere. Its subcellular location is the kinetochore. It localises to the cytoplasm. The protein resides in the cytoskeleton. The protein localises to the microtubule organizing center. It is found in the spindle pole body. In terms of biological role, component of the kinetochore, a multiprotein complex that assembles on centromeric DNA and attaches chromosomes to spindle microtubules, mediating chromosome segregation and sister chromatid segregation during meiosis and mitosis. Component of the inner kinetochore COMA complex, which connects centromere-associated proteins and the outer kinetochore. COMA interacts with other inner kinetochore proteins to form the inner kinetochore constitutive centromere-associated network (CCAN), which serves as a structural platform for outer kinetochore assembly. The sequence is that of Inner kinetochore subunit fta7 (fta7) from Schizosaccharomyces pombe (strain 972 / ATCC 24843) (Fission yeast).